The sequence spans 139 residues: Protein archease (139 aa).

Aspartate 12, aspartate 138, and isoleucine 139 together coordinate Ca(2+).

The protein belongs to the archease family.

Its function is as follows. Activates the tRNA-splicing ligase complex by facilitating the enzymatic turnover of catalytic subunit RtcB. Acts by promoting the guanylylation of RtcB, a key intermediate step in tRNA ligation. Can also alter the NTP specificity of RtcB such that ATP, dGTP or ITP is used efficiently. The chain is Protein archease from Saccharolobus islandicus (strain M.16.27) (Sulfolobus islandicus).